Here is a 568-residue protein sequence, read N- to C-terminus: 2-succinyl-5-enolpyruvyl-6-hydroxy-3-cyclohexene-1-carboxylate synthase (568 aa).

Belongs to the TPP enzyme family. MenD subfamily. As to quaternary structure, homodimer. Mg(2+) is required as a cofactor. Mn(2+) serves as cofactor. It depends on thiamine diphosphate as a cofactor.

It carries out the reaction isochorismate + 2-oxoglutarate + H(+) = 5-enolpyruvoyl-6-hydroxy-2-succinyl-cyclohex-3-ene-1-carboxylate + CO2. It functions in the pathway quinol/quinone metabolism; 1,4-dihydroxy-2-naphthoate biosynthesis; 1,4-dihydroxy-2-naphthoate from chorismate: step 2/7. It participates in quinol/quinone metabolism; menaquinone biosynthesis. Its function is as follows. Catalyzes the thiamine diphosphate-dependent decarboxylation of 2-oxoglutarate and the subsequent addition of the resulting succinic semialdehyde-thiamine pyrophosphate anion to isochorismate to yield 2-succinyl-5-enolpyruvyl-6-hydroxy-3-cyclohexene-1-carboxylate (SEPHCHC). This Haemophilus influenzae (strain ATCC 51907 / DSM 11121 / KW20 / Rd) protein is 2-succinyl-5-enolpyruvyl-6-hydroxy-3-cyclohexene-1-carboxylate synthase.